A 238-amino-acid polypeptide reads, in one-letter code: Glutamine amidotransferase-like protein chyE (238 aa).

In terms of domain architecture, Glutamine amidotransferase type-1 spans 8–238 (KIAVLINTPP…LERVLQWLSE (231 aa)). The active-site Nucleophile is the Cys-102. Catalysis depends on residues His-189 and Glu-191.

It belongs to the peptidase C26 family.

Its pathway is pigment biosynthesis. Glutamine amidotransferase-like protein; part of the gene cluster that mediates the biosynthesis of the yellow pigment chrysogine. the NRPS chyA mediates the condensation of anthranilic acid and alanine into the intermediate 2-(2-aminopropanamido)benzoic acid. The remainder of the pathway is highly branched yielding at least 13 chrysogine-related compounds. The malonyl transferase chyE converts 2-(2-aminopropanamido)benzoic acid and 2-(2-aminopropanamido)benzamidine into 2-(2-(2-carboxyacetamido)propanamido)benzoic acid and 3-((1-((2-carbamoylphenyl)amino)-1-oxopropan-2-yl)amino)-3-oxopropanoic acid, respectively. ChyD is an amidase, being responsible for the amidation of the carboxylic acid moiety of 2-(2-aminopropanamido)benzoic acid, 2-(2-(2-carboxyacetamido)propanamido)benzoic acid and 2-(2-((4-amino-1-carboxy-4-oxobutyl)amino)propanamido)benzoic acid. ChyC is involved in the same reactions as ChyD, but plays a more minor role in the amidation reactions compared to chyD. The oxidoreductases chyH and chyM are involved in oxidation reactions that form N-pyruvoylanthranilamide from 2-(2-aminopropanamido)benzamidine and (1-((2-carbamoylphenyl)amino)-1-oxopropan-2-yl)glutamine, respectively. N-pyruvoylanthranilamide is further converted via two further branches in the pathway, yielding chrysogine and additional chrysogine-related coumpounds. Chrysogine is likely formed by a spontaneous ring closure from N-pyruvoylanthranilamide. The protein is Glutamine amidotransferase-like protein chyE of Penicillium rubens (strain ATCC 28089 / DSM 1075 / NRRL 1951 / Wisconsin 54-1255) (Penicillium chrysogenum).